The sequence spans 430 residues: tRNA(Ile)-lysidine synthase (430 aa).

Residue 24-29 participates in ATP binding; the sequence is SGGLDS.

It belongs to the tRNA(Ile)-lysidine synthase family.

It localises to the cytoplasm. It catalyses the reaction cytidine(34) in tRNA(Ile2) + L-lysine + ATP = lysidine(34) in tRNA(Ile2) + AMP + diphosphate + H(+). Functionally, ligates lysine onto the cytidine present at position 34 of the AUA codon-specific tRNA(Ile) that contains the anticodon CAU, in an ATP-dependent manner. Cytidine is converted to lysidine, thus changing the amino acid specificity of the tRNA from methionine to isoleucine. This is tRNA(Ile)-lysidine synthase from Haemophilus influenzae (strain PittGG).